We begin with the raw amino-acid sequence, 205 residues long: Large ribosomal subunit protein uL18 (205 aa).

The protein belongs to the universal ribosomal protein uL18 family. Part of the 50S ribosomal subunit. Contacts the 5S and 23S rRNAs.

Functionally, this is one of the proteins that bind and probably mediate the attachment of the 5S RNA into the large ribosomal subunit, where it forms part of the central protuberance. In Pyrobaculum islandicum (strain DSM 4184 / JCM 9189 / GEO3), this protein is Large ribosomal subunit protein uL18.